The following is a 142-amino-acid chain: Large ribosomal subunit protein uL11 (142 aa).

Residues 84–103 are disordered; sequence AGVKSGSGRPNSDKVGTVTD.

This sequence belongs to the universal ribosomal protein uL11 family. Part of the ribosomal stalk of the 50S ribosomal subunit. Interacts with L10 and the large rRNA to form the base of the stalk. L10 forms an elongated spine to which L12 dimers bind in a sequential fashion forming a multimeric L10(L12)X complex. Post-translationally, one or more lysine residues are methylated.

Its function is as follows. Forms part of the ribosomal stalk which helps the ribosome interact with GTP-bound translation factors. The sequence is that of Large ribosomal subunit protein uL11 from Aliivibrio salmonicida (strain LFI1238) (Vibrio salmonicida (strain LFI1238)).